We begin with the raw amino-acid sequence, 235 residues long: Probable inactive serine protease 37 (235 aa).

Residues 1–19 (MKFTFCLTVLAGTFFSAHS) form the signal peptide. Residues 20–233 (SVQKDDPSPY…YVSWIESTTK (214 aa)) form the Peptidase S1 domain. Intrachain disulfides connect Cys-40-Cys-56, Cys-131-Cys-198, and Cys-163-Cys-177.

This sequence belongs to the peptidase S1 family.

The protein localises to the cytoplasmic vesicle. The protein resides in the secretory vesicle. It is found in the acrosome. Its subcellular location is the secreted. Functionally, plays a role in male fertility. May have a role in sperm migration or binding to zona-intact eggs. Involved in the activation of the proacrosin/acrosin system. In Bos taurus (Bovine), this protein is Probable inactive serine protease 37.